We begin with the raw amino-acid sequence, 309 residues long: MVKIYAPASIGNVSVGFDVLGAAVSPVDGSLLGDCVSVEAADLFSLRNEGRFVSKLPDNPKENIVYQCWELFCQEIGKTVPVAMTLEKNMPIGSGLGSSACSVVAGLMAMNEFCGKPLDDTRLLRLMGELEGRISGSVHYDNVAPCFLGGVQLMLEENGIISQPVPSFDDWLWVMAYPGIKVSTAEARAILPAQYRRQDCISHGRYLAGFIHACHTGQAELAAKLMKDVIAEPYRTKLLPGFAAARQAAEDIGALACGISGSGPTLFSVCNDMASAQRLADWLRDNYLQNDEGFVHICRLDKTGARQLG.

91-101 (PIGSGLGSSAC) is a binding site for ATP.

It belongs to the GHMP kinase family. Homoserine kinase subfamily.

It localises to the cytoplasm. It carries out the reaction L-homoserine + ATP = O-phospho-L-homoserine + ADP + H(+). Its pathway is amino-acid biosynthesis; L-threonine biosynthesis; L-threonine from L-aspartate: step 4/5. In terms of biological role, catalyzes the ATP-dependent phosphorylation of L-homoserine to L-homoserine phosphate. This chain is Homoserine kinase, found in Pectobacterium atrosepticum (strain SCRI 1043 / ATCC BAA-672) (Erwinia carotovora subsp. atroseptica).